We begin with the raw amino-acid sequence, 511 residues long: UDP-N-acetylmuramoyl-L-alanyl-D-glutamate--2,6-diaminopimelate ligase (511 aa).

UDP-N-acetyl-alpha-D-muramoyl-L-alanyl-D-glutamate is bound at residue S30. 110-116 (GTNGKTT) is an ATP binding site. UDP-N-acetyl-alpha-D-muramoyl-L-alanyl-D-glutamate is bound by residues 152 to 153 (TT), S179, Q185, and R187. K219 carries the post-translational modification N6-carboxylysine. Meso-2,6-diaminopimelate-binding positions include R385, 409–412 (DNPR), G476, and E480. Positions 409–412 (DNPR) match the Meso-diaminopimelate recognition motif motif.

Belongs to the MurCDEF family. MurE subfamily. It depends on Mg(2+) as a cofactor. Post-translationally, carboxylation is probably crucial for Mg(2+) binding and, consequently, for the gamma-phosphate positioning of ATP.

The protein localises to the cytoplasm. The enzyme catalyses UDP-N-acetyl-alpha-D-muramoyl-L-alanyl-D-glutamate + meso-2,6-diaminopimelate + ATP = UDP-N-acetyl-alpha-D-muramoyl-L-alanyl-gamma-D-glutamyl-meso-2,6-diaminopimelate + ADP + phosphate + H(+). It participates in cell wall biogenesis; peptidoglycan biosynthesis. In terms of biological role, catalyzes the addition of meso-diaminopimelic acid to the nucleotide precursor UDP-N-acetylmuramoyl-L-alanyl-D-glutamate (UMAG) in the biosynthesis of bacterial cell-wall peptidoglycan. In Geobacter metallireducens (strain ATCC 53774 / DSM 7210 / GS-15), this protein is UDP-N-acetylmuramoyl-L-alanyl-D-glutamate--2,6-diaminopimelate ligase.